A 197-amino-acid polypeptide reads, in one-letter code: dCTP deaminase, dUMP-forming (197 aa).

DCTP-binding positions include 105–110 (RSSMGR), aspartate 123, 131–133 (TLE), glutamine 152, tyrosine 166, lysine 174, and glutamine 178. The active-site Proton donor/acceptor is glutamate 133.

This sequence belongs to the dCTP deaminase family. As to quaternary structure, homotrimer.

It catalyses the reaction dCTP + 2 H2O = dUMP + NH4(+) + diphosphate. It functions in the pathway pyrimidine metabolism; dUMP biosynthesis; dUMP from dCTP: step 1/1. Functionally, bifunctional enzyme that catalyzes both the deamination of dCTP to dUTP and the hydrolysis of dUTP to dUMP without releasing the toxic dUTP intermediate. The polypeptide is dCTP deaminase, dUMP-forming (Methanosphaera stadtmanae (strain ATCC 43021 / DSM 3091 / JCM 11832 / MCB-3)).